Here is an 87-residue protein sequence, read N- to C-terminus: Toxin ICK-41 (87 aa).

Positions 1–19 (MKPIVYMLLFCAFTVVILG) are cleaved as a signal peptide. 4 disulfides stabilise this stretch: Cys-40/Cys-54, Cys-40/Cys-77, Cys-53/Cys-66, and Cys-80/Cys-87.

It belongs to the neurotoxin 27 (Jztx-72) family. ICK-41 subfamily. In terms of tissue distribution, expressed by the venom gland.

It localises to the secreted. Its function is as follows. Probable neurotoxin with ion channel impairing activity. The polypeptide is Toxin ICK-41 (Trittame loki (Brush-footed trapdoor spider)).